The sequence spans 100 residues: Urease subunit gamma (100 aa).

The protein belongs to the urease gamma subunit family. In terms of assembly, heterotrimer of UreA (gamma), UreB (beta) and UreC (alpha) subunits. Three heterotrimers associate to form the active enzyme.

Its subcellular location is the cytoplasm. The catalysed reaction is urea + 2 H2O + H(+) = hydrogencarbonate + 2 NH4(+). The protein operates within nitrogen metabolism; urea degradation; CO(2) and NH(3) from urea (urease route): step 1/1. The protein is Urease subunit gamma of Lachnoclostridium phytofermentans (strain ATCC 700394 / DSM 18823 / ISDg) (Clostridium phytofermentans).